Reading from the N-terminus, the 524-residue chain is Origin of replication complex subunit 5 (524 aa).

A compositionally biased stretch (low complexity) spans 1–19; it reads MSQPVTPRRTTRSSASASP. Positions 1-56 are disordered; it reads MSQPVTPRRTTRSSASASPSPAPASPTSPPKSRPKPSPRRQLLAAAAAPPKEDGSS. The segment covering 20-31 has biased composition (pro residues); the sequence is SPAPASPTSPPK. A compositionally biased stretch (low complexity) spans 39–49; the sequence is RRQLLAAAAAP. 90–97 serves as a coordination point for ATP; it reads GGAATGKT.

This sequence belongs to the ORC5 family. Component of the origin recognition complex (ORC) composed of at least ORC1, ORC2, ORC3, ORC4, ORC5 and ORC6. ORC is regulated in a cell-cycle and development dependent manner. It is sequentially assembled at the exit from anaphase of mitosis and disassembled as cells enter S phase.

The protein resides in the nucleus. Component of the origin recognition complex (ORC) that binds origins of replication. DNA-binding is ATP-dependent. The specific DNA sequences that define origins of replication have not been identified yet. ORC is required to assemble the pre-replication complex necessary to initiate DNA replication. This chain is Origin of replication complex subunit 5, found in Oryza sativa subsp. indica (Rice).